A 155-amino-acid chain; its full sequence is MDIRKIKKLIELVEESGITELEVQEEEGTVRISRAAPVIAPAAVQYAAAPVVAPTPAAAPAQVPAAATTAPAASDELSGHLVRSPMVGTFYRSPSPEAKAFVEVGQSVKVGDALCIVEAMKMMNRIEADKAGVVKAILINDGNAVEFDEPLIVIE.

In terms of domain architecture, Biotinyl-binding spans 72–155 (AASDELSGHL…EFDEPLIVIE (84 aa)). Lys-121 bears the N6-biotinyllysine mark.

In terms of assembly, homodimer.

It participates in lipid metabolism; fatty acid biosynthesis. Functionally, this protein is a component of the acetyl coenzyme A carboxylase complex; first, biotin carboxylase catalyzes the carboxylation of the carrier protein and then the transcarboxylase transfers the carboxyl group to form malonyl-CoA. In Haemophilus influenzae (strain ATCC 51907 / DSM 11121 / KW20 / Rd), this protein is Biotin carboxyl carrier protein of acetyl-CoA carboxylase (accB).